Consider the following 456-residue polypeptide: MLNNAMSVVILAAGKGTRMYSDLPKVLHTLAGKAMVQHVIDAANELGAAHVHLVYGHGGDLLKQALKDDNLNWVLQAEQLGTGHAMQQAAPFFADDEDILMLYGDVPLISVETLQRLRDAKPQGGIGLLTVKLDDPTGYGRITRENGKVTGIVEHKDATDEQRQIQEINTGILISNGADMKRWLAKLTNNNAQGEYYITDIIALAYQEGREIVAVHPQRLSEVEGVNNRLQLSRLERVYQSEQAEKLLLAGVMLRDPARFDLRGTLTHGRDVEIDTNVIIEGNVTLGHRVKIGTGCVIKNSVIGDDCEISPYTVVEDVNLAAACTIGPFARLRPGAELLEGAHVGNFVEMKKARLGKGSKAGHLTYLGDAEIGDNVNIGAGTITCNYDGANKFKTIIGDDVFVGSDTQLVAPVTVGKGATIAAGTTVTRNVGENALAISRVPQTQKEGWRRPVKKK.

Residues 1–229 form a pyrophosphorylase region; that stretch reads MLNNAMSVVI…LSEVEGVNNR (229 aa). UDP-N-acetyl-alpha-D-glucosamine is bound by residues 11-14, K25, Q76, 81-82, 103-105, G140, E154, N169, and N227; these read LAAG, GT, and YGD. Mg(2+) is bound at residue D105. N227 contributes to the Mg(2+) binding site. Positions 230–250 are linker; sequence LQLSRLERVYQSEQAEKLLLA. The segment at 251 to 456 is N-acetyltransferase; that stretch reads GVMLRDPARF…EGWRRPVKKK (206 aa). UDP-N-acetyl-alpha-D-glucosamine contacts are provided by R333 and K351. The active-site Proton acceptor is the H363. The UDP-N-acetyl-alpha-D-glucosamine site is built by Y366 and N377. Acetyl-CoA-binding positions include A380, 386 to 387, S405, A423, and R440; that span reads NY.

It in the N-terminal section; belongs to the N-acetylglucosamine-1-phosphate uridyltransferase family. The protein in the C-terminal section; belongs to the transferase hexapeptide repeat family. In terms of assembly, homotrimer. The cofactor is Mg(2+).

It localises to the cytoplasm. It catalyses the reaction alpha-D-glucosamine 1-phosphate + acetyl-CoA = N-acetyl-alpha-D-glucosamine 1-phosphate + CoA + H(+). The enzyme catalyses N-acetyl-alpha-D-glucosamine 1-phosphate + UTP + H(+) = UDP-N-acetyl-alpha-D-glucosamine + diphosphate. It functions in the pathway nucleotide-sugar biosynthesis; UDP-N-acetyl-alpha-D-glucosamine biosynthesis; N-acetyl-alpha-D-glucosamine 1-phosphate from alpha-D-glucosamine 6-phosphate (route II): step 2/2. The protein operates within nucleotide-sugar biosynthesis; UDP-N-acetyl-alpha-D-glucosamine biosynthesis; UDP-N-acetyl-alpha-D-glucosamine from N-acetyl-alpha-D-glucosamine 1-phosphate: step 1/1. It participates in bacterial outer membrane biogenesis; LPS lipid A biosynthesis. Catalyzes the last two sequential reactions in the de novo biosynthetic pathway for UDP-N-acetylglucosamine (UDP-GlcNAc). The C-terminal domain catalyzes the transfer of acetyl group from acetyl coenzyme A to glucosamine-1-phosphate (GlcN-1-P) to produce N-acetylglucosamine-1-phosphate (GlcNAc-1-P), which is converted into UDP-GlcNAc by the transfer of uridine 5-monophosphate (from uridine 5-triphosphate), a reaction catalyzed by the N-terminal domain. In Shigella boydii serotype 4 (strain Sb227), this protein is Bifunctional protein GlmU.